The sequence spans 383 residues: Homoserine O-acetyltransferase (383 aa).

One can recognise an AB hydrolase-1 domain in the interval 52–362 (NAILVCHALT…PWGHDAFLLD (311 aa)). The active-site Nucleophile is serine 158. Arginine 227 lines the substrate pocket. Active-site residues include aspartate 323 and histidine 356. A substrate-binding site is contributed by aspartate 357.

This sequence belongs to the AB hydrolase superfamily. MetX family. In terms of assembly, homodimer.

It is found in the cytoplasm. The catalysed reaction is L-homoserine + acetyl-CoA = O-acetyl-L-homoserine + CoA. Its pathway is amino-acid biosynthesis; L-methionine biosynthesis via de novo pathway; O-acetyl-L-homoserine from L-homoserine: step 1/1. Transfers an acetyl group from acetyl-CoA to L-homoserine, forming acetyl-L-homoserine. The protein is Homoserine O-acetyltransferase of Symbiobacterium thermophilum (strain DSM 24528 / JCM 14929 / IAM 14863 / T).